A 594-amino-acid polypeptide reads, in one-letter code: MVDIEAVRAKYREERDKRVQADGGRQYLSAQGEFAHYADDPHAKPIERAPVSDEVDVTIIGAGIGGLLLGARLREACAFDTIRLVDKAGDVGGTWYWNRFPGLRCDVESYVYMPLLEELGRLPSEKYATGAEIFEHCQAIARTYDLYDEALLQTSVTELSWDEDSSRWLVRTDRGDLVRSRFVAMAIGSLHRPKLPSIPGTEAFQGHSFHTSRWDFAYTGGDISGGLEKLGDKRVGIVGTGATAVQCIPHLAESAAHLYVFQRTPSTVSVRNNRPTDPGWAAGLEPGWQQRRMDNFHALTSGVDQDVDLVQDGWTEITSKLAAILPKSAADADPKDIGTAVELADFHKMEELRKRVDAIVHDKDTADALKPYYRLFCKRPCFHDGYLDTYNRPNVTLVDTQGRGVERLTPTSVVAGGREYPVDCLIFASGYESEFGVPYTNRTGFSIVGRDGIRLSEKWAEGARTFHGLQVNGFPNCFILSKAQSGLHVNVPYMLNEQSKHVAYILKAVQQRGRQVVEASATGEKEWVETILRLANRNLDFTESCTPGLFNNEGNPRNVAILNSSYGGGSVGFVNILKRWREADDLADLELREG.

FAD-binding positions include 64-65 (IG), 86-87 (DK), 94-95 (TW), 106-107 (DV), Tyr-112, Val-156, and Met-494.

Belongs to the FAD-binding monooxygenase family. Requires FAD as cofactor.

It carries out the reaction 1-deoxy-11-oxopentalenate + NADPH + O2 + H(+) = neopentalenolactone D + NADP(+) + H2O. It participates in antibiotic biosynthesis; neopentalenolactone biosynthesis. In terms of biological role, catalyzes the flavin-dependent Baeyer-Villiger oxidation of 1-deoxy-11-oxopentalenic acid to neopentalenolactone D in the biosynthesis of neopentalenolactone antibiotic. The polypeptide is Neopentalenolactone D synthase (ptlE) (Streptomyces avermitilis (strain ATCC 31267 / DSM 46492 / JCM 5070 / NBRC 14893 / NCIMB 12804 / NRRL 8165 / MA-4680)).